Consider the following 236-residue polypeptide: Calcium-binding lectin RapA2 (236 aa).

Its subcellular location is the secreted. Functionally, interacts specifically in a calcium-dependent manner with the acidic exopolysaccharide (EPS) and capsular polysaccharide produced by R.leguminosarum. Could be involved in the development of the biofilm matrix made of EPS. The polypeptide is Calcium-binding lectin RapA2 (Rhizobium johnstonii (strain DSM 114642 / LMG 32736 / 3841) (Rhizobium leguminosarum bv. viciae)).